Here is a 475-residue protein sequence, read N- to C-terminus: Ribulose bisphosphate carboxylase large chain (475 aa).

A propeptide spanning residues 1–2 (MS) is cleaved from the precursor. Proline 3 carries the post-translational modification N-acetylproline. Lysine 14 carries the N6,N6,N6-trimethyllysine modification. 2 residues coordinate substrate: asparagine 123 and threonine 173. The Proton acceptor role is filled by lysine 175. Lysine 177 is a substrate binding site. 3 residues coordinate Mg(2+): lysine 201, aspartate 203, and glutamate 204. Lysine 201 is subject to N6-carboxylysine. Catalysis depends on histidine 294, which acts as the Proton acceptor. Substrate-binding residues include histidine 327 and serine 379.

This sequence belongs to the RuBisCO large chain family. Type I subfamily. Heterohexadecamer of 8 large chains and 8 small chains; disulfide-linked. The disulfide link is formed within the large subunit homodimers. It depends on Mg(2+) as a cofactor. Post-translationally, the disulfide bond which can form in the large chain dimeric partners within the hexadecamer appears to be associated with oxidative stress and protein turnover.

The protein localises to the plastid. It localises to the chloroplast. It catalyses the reaction 2 (2R)-3-phosphoglycerate + 2 H(+) = D-ribulose 1,5-bisphosphate + CO2 + H2O. The enzyme catalyses D-ribulose 1,5-bisphosphate + O2 = 2-phosphoglycolate + (2R)-3-phosphoglycerate + 2 H(+). Its function is as follows. RuBisCO catalyzes two reactions: the carboxylation of D-ribulose 1,5-bisphosphate, the primary event in carbon dioxide fixation, as well as the oxidative fragmentation of the pentose substrate in the photorespiration process. Both reactions occur simultaneously and in competition at the same active site. The polypeptide is Ribulose bisphosphate carboxylase large chain (Amaranthus hypochondriacus (Prince-of-Wales feather)).